The following is a 136-amino-acid chain: uncharacterized protein (136 aa).

The segment at S46–R136 is disordered. Over residues G99–G108 the composition is skewed to gly residues. Over residues I123–R136 the composition is skewed to acidic residues.

This is an uncharacterized protein from Homo sapiens (Human).